A 126-amino-acid polypeptide reads, in one-letter code: Small ribosomal subunit protein uS13 (126 aa).

The disordered stretch occupies residues 92–126; sequence HRRGLPVRGQRTKTNARTRKGPKKTVAGKKKATRK.

This sequence belongs to the universal ribosomal protein uS13 family. Part of the 30S ribosomal subunit. Forms a loose heterodimer with protein S19. Forms two bridges to the 50S subunit in the 70S ribosome.

Located at the top of the head of the 30S subunit, it contacts several helices of the 16S rRNA. In the 70S ribosome it contacts the 23S rRNA (bridge B1a) and protein L5 of the 50S subunit (bridge B1b), connecting the 2 subunits; these bridges are implicated in subunit movement. Contacts the tRNAs in the A and P-sites. In Deinococcus deserti (strain DSM 17065 / CIP 109153 / LMG 22923 / VCD115), this protein is Small ribosomal subunit protein uS13.